The primary structure comprises 92 residues: Probable Fe(2+)-trafficking protein (92 aa).

This sequence belongs to the Fe(2+)-trafficking protein family.

Functionally, could be a mediator in iron transactions between iron acquisition and iron-requiring processes, such as synthesis and/or repair of Fe-S clusters in biosynthetic enzymes. This Shewanella loihica (strain ATCC BAA-1088 / PV-4) protein is Probable Fe(2+)-trafficking protein.